The sequence spans 149 residues: MRTVVQRVSRASVTVEGRISGAIERGLLVLLGVGQDDAESEAEYLAEKIAGLRIFEDENEKMNLSVVDVGGAVLAVSQFTLYGDVRKGKRPSFDAAARPERAKELYEYFVAQIRAKGLRCETGVFQAMMHVELVNDGPVTILLDSKKEF.

Residues 137 to 138 (GP) carry the Gly-cisPro motif, important for rejection of L-amino acids motif.

This sequence belongs to the DTD family. Homodimer.

The protein resides in the cytoplasm. The catalysed reaction is glycyl-tRNA(Ala) + H2O = tRNA(Ala) + glycine + H(+). It carries out the reaction a D-aminoacyl-tRNA + H2O = a tRNA + a D-alpha-amino acid + H(+). Functionally, an aminoacyl-tRNA editing enzyme that deacylates mischarged D-aminoacyl-tRNAs. Also deacylates mischarged glycyl-tRNA(Ala), protecting cells against glycine mischarging by AlaRS. Acts via tRNA-based rather than protein-based catalysis; rejects L-amino acids rather than detecting D-amino acids in the active site. By recycling D-aminoacyl-tRNA to D-amino acids and free tRNA molecules, this enzyme counteracts the toxicity associated with the formation of D-aminoacyl-tRNA entities in vivo and helps enforce protein L-homochirality. This is D-aminoacyl-tRNA deacylase from Koribacter versatilis (strain Ellin345).